Here is a 534-residue protein sequence, read N- to C-terminus: Glycolytic genes transcriptional activator GCR2 (534 aa).

A disordered region spans residues 29–122 (LQSVTNSPQT…TGNNASSSAT (94 aa)). Residues 30–43 (QSVTNSPQTTTNTP) show a composition bias toward low complexity. Residues 64 to 88 (SDSTPNIDEIITSTGSNALTKTNSD) are compositionally biased toward polar residues. Over residues 89–122 (SANGTPNGNSSSTSAISNASNPATTGNNASSSAT) the composition is skewed to low complexity. A Phosphoserine modification is found at S151. The tract at residues 230 to 333 (LTQGRRKGNS…SNPGTNMLFD (104 aa)) is disordered. Polar residues predominate over residues 238-252 (NSLNTSTKGSPSDLQ). Over residues 253-279 (GINNGNNNGNNGNIGNGSNIKNYGNKN) the composition is skewed to low complexity. Residues 281–288 (PNNRTKKR) carry the Nuclear localization signal motif. The segment covering 295 to 304 (NAKNGKNNKN) has biased composition (low complexity). Positions 312 to 328 (ITDTSAFSNTTISNPGT) are enriched in polar residues. Phosphoserine is present on residues S406 and S409. The tract at residues 497–534 (IVQLERELELQRQETQWLRKMLIEDMGCVRSMLRDLQR) is leucine-zipper.

Homodimer via the leucine-zipper domain. Forms a complex with a GCR1 homodimer.

It localises to the nucleus. Transcriptional activator required for the expression of glycolytic genes. Enhances the CT box-dependent transcriptional activation of a RAP1-GCR1 complex. Required for GCR1 phosphorylation. The protein is Glycolytic genes transcriptional activator GCR2 (GCR2) of Saccharomyces cerevisiae (strain ATCC 204508 / S288c) (Baker's yeast).